A 158-amino-acid polypeptide reads, in one-letter code: Protein-export protein SecB (158 aa).

This sequence belongs to the SecB family. In terms of assembly, homotetramer, a dimer of dimers. One homotetramer interacts with 1 SecA dimer.

It is found in the cytoplasm. In terms of biological role, one of the proteins required for the normal export of preproteins out of the cell cytoplasm. It is a molecular chaperone that binds to a subset of precursor proteins, maintaining them in a translocation-competent state. It also specifically binds to its receptor SecA. This Anaplasma phagocytophilum (strain HZ) protein is Protein-export protein SecB.